A 286-amino-acid polypeptide reads, in one-letter code: Pantothenate synthetase (286 aa).

30 to 37 is an ATP binding site; the sequence is MGFLHEGH. The active-site Proton donor is histidine 37. Glutamine 61 is a (R)-pantoate binding site. Residue glutamine 61 coordinates beta-alanine. 147–150 contributes to the ATP binding site; the sequence is GLKD. Glutamine 153 serves as a coordination point for (R)-pantoate. Residues valine 176 and 184 to 187 contribute to the ATP site; that span reads KSSR.

The protein belongs to the pantothenate synthetase family. In terms of assembly, homodimer.

The protein localises to the cytoplasm. It carries out the reaction (R)-pantoate + beta-alanine + ATP = (R)-pantothenate + AMP + diphosphate + H(+). The protein operates within cofactor biosynthesis; (R)-pantothenate biosynthesis; (R)-pantothenate from (R)-pantoate and beta-alanine: step 1/1. Catalyzes the condensation of pantoate with beta-alanine in an ATP-dependent reaction via a pantoyl-adenylate intermediate. The protein is Pantothenate synthetase of Bacillus velezensis (strain DSM 23117 / BGSC 10A6 / LMG 26770 / FZB42) (Bacillus amyloliquefaciens subsp. plantarum).